Reading from the N-terminus, the 142-residue chain is Transcription antitermination protein NusB (142 aa).

This sequence belongs to the NusB family.

Functionally, involved in transcription antitermination. Required for transcription of ribosomal RNA (rRNA) genes. Binds specifically to the boxA antiterminator sequence of the ribosomal RNA (rrn) operons. This Persephonella marina (strain DSM 14350 / EX-H1) protein is Transcription antitermination protein NusB.